A 110-amino-acid polypeptide reads, in one-letter code: Large ribosomal subunit protein uL22 (110 aa).

It belongs to the universal ribosomal protein uL22 family. As to quaternary structure, part of the 50S ribosomal subunit.

Functionally, this protein binds specifically to 23S rRNA; its binding is stimulated by other ribosomal proteins, e.g. L4, L17, and L20. It is important during the early stages of 50S assembly. It makes multiple contacts with different domains of the 23S rRNA in the assembled 50S subunit and ribosome. Its function is as follows. The globular domain of the protein is located near the polypeptide exit tunnel on the outside of the subunit, while an extended beta-hairpin is found that lines the wall of the exit tunnel in the center of the 70S ribosome. The sequence is that of Large ribosomal subunit protein uL22 from Paracidovorax citrulli (strain AAC00-1) (Acidovorax citrulli).